Consider the following 349-residue polypeptide: Phosphoribosylformylglycinamidine cyclo-ligase (349 aa).

The protein belongs to the AIR synthase family.

Its subcellular location is the cytoplasm. It catalyses the reaction 2-formamido-N(1)-(5-O-phospho-beta-D-ribosyl)acetamidine + ATP = 5-amino-1-(5-phospho-beta-D-ribosyl)imidazole + ADP + phosphate + H(+). It participates in purine metabolism; IMP biosynthesis via de novo pathway; 5-amino-1-(5-phospho-D-ribosyl)imidazole from N(2)-formyl-N(1)-(5-phospho-D-ribosyl)glycinamide: step 2/2. The protein is Phosphoribosylformylglycinamidine cyclo-ligase of Methanococcus maripaludis (strain C7 / ATCC BAA-1331).